The primary structure comprises 257 residues: Short-chain dehydrogenase reductase 3b (257 aa).

12–36 (IITGGASGIGAESVRLFTEHGARVV) contributes to the NAD(+) binding site. Residue serine 144 participates in substrate binding. Tyrosine 157 (proton acceptor) is an active-site residue.

It belongs to the short-chain dehydrogenases/reductases (SDR) family.

The polypeptide is Short-chain dehydrogenase reductase 3b (SDR3b) (Arabidopsis thaliana (Mouse-ear cress)).